Here is a 662-residue protein sequence, read N- to C-terminus: PAN2-PAN3 deadenylation complex subunit PAN3 (662 aa).

Disordered stretches follow at residues 1–26 (MASA…AREN) and 59–131 (TTYQ…RAET). A C3H1-type zinc finger spans residues 26-55 (NAKDTLCRNVTIYGRCRYEDKGCAFNHDPH). The segment covering 72-85 (DSPSFTPSLLSSNG) has biased composition (polar residues). The span at 86-102 (SSPTTASVTAKKAATIS) shows a compositional bias: low complexity. Residues 114–126 (RNITSRSNTSTPS) show a composition bias toward polar residues. The tract at residues 265 to 525 (QTLPNTQLPA…NIDIFITGIS (261 aa)) is pseudokinase domain. Residues arginine 317, 366-373 (DYHPLSKT), and 425-426 (SK) contribute to the ATP site. The stretch at 526–564 (SQLMSTFDSALHLDDELTSDLSRELENGRLVRLVTKLNF) forms a coiled coil. The tract at residues 565–662 (VNERPEYEHD…ALLKPTRRLH (98 aa)) is knob domain.

Belongs to the protein kinase superfamily. PAN3 family. Homodimer. Forms a heterotrimer with a catalytic subunit pan2 to form the poly(A)-nuclease (PAN) deadenylation complex. Interacts (via PAM-2 motif) with poly(A)-binding protein pab1 (via PABC domain), conferring substrate specificity of the enzyme complex.

Its subcellular location is the cytoplasm. Its function is as follows. Regulatory subunit of the poly(A)-nuclease (PAN) deadenylation complex, one of two cytoplasmic mRNA deadenylases involved in mRNA turnover. PAN specifically shortens poly(A) tails of RNA and the activity is stimulated by poly(A)-binding protein pab1. PAN deadenylation is followed by rapid degradation of the shortened mRNA tails by the CCR4-NOT complex. Deadenylated mRNAs are then degraded by two alternative mechanisms, namely exosome-mediated 3'-5' exonucleolytic degradation, or deadenylation-dependent mRNA decaping and subsequent 5'-3' exonucleolytic degradation by xrn1. May also be involved in post-transcriptional maturation of mRNA poly(A) tails. pan3 acts as a positive regulator for PAN activity, recruiting the catalytic subunit pan2 to mRNA via its interaction with RNA and with pab1. The sequence is that of PAN2-PAN3 deadenylation complex subunit PAN3 from Aspergillus oryzae (strain ATCC 42149 / RIB 40) (Yellow koji mold).